An 82-amino-acid chain; its full sequence is Delta-ctenitoxin-Pn2a (82 aa).

The N-terminal stretch at 1 to 17 (MKVAILFLSILVLAVAS) is a signal peptide. Residues 18–34 (ESIEESRDDFAVEELGR) constitute a propeptide that is removed on maturation. 5 disulfide bridges follow: Cys37-Cys51, Cys44-Cys57, Cys48-Cys80, Cys50-Cys65, and Cys59-Cys63.

The protein belongs to the neurotoxin 03 (Tx2) family. 06 subfamily. In terms of tissue distribution, expressed by the venom gland.

The protein resides in the secreted. In terms of biological role, toxin that is known to potentiate erectile function. It binds voltage-dependently to sodium channels (Nav), inhibits the inactivation of the activated channels and decreases the peak inward current. The toxin delays inactivation of Nav1.2/SCN2A, Nav1.3/SCN3A, Nav1.4/SCN4A and Nav1.8/SCN10A, slows the inactivation process and decreases the sodium peak amplitude of Nav1.5/SCN5A and Nav1.6/SCN8A. In vivo, it enhances erectile function by inducing the release of nictric oxide (NO): it slows the sodium current, leading to depolarization, which leads to an increase in calcium influx (probably via activation of N-type calcium channels) which in turn activates neuronal NO synthase (nNOS/NOS1), inducing nitric oxide (NO) production. In a final step, NO activates soluble guanylate cyclase (GUCY1A1/GUCY1B1) which in turn increases cGMP formation, resulting in penile erection. It is noteworthy that the toxin does not provoke erection by inhibiting phosphodiesterase type 5 (PDE5A), an enzyme that hydrolysis cGMP. In vivo, it also causes scratching, lacrimation, hypersalivation, sweating and agitation followed by spastic paralysis of the anterior and posterior extremities and death at dose levels of 0.79 mg/mouse. It is insecticidal to the larval and adult forms of the house fly. The toxin also improves cavernosal relaxation in different models where erectile dysfunction is observed, such as deoxycorticosterone-acetate (DOCA)-salt hypertensive rats, mice models for type-1 diabetes, as well as elderly rats. This Phoneutria nigriventer (Brazilian armed spider) protein is Delta-ctenitoxin-Pn2a.